A 32-amino-acid chain; its full sequence is Photosystem II reaction center protein T (32 aa).

A helical membrane pass occupies residues 3 to 23 (AFAYVLILTLAVVTLFFAVAF).

This sequence belongs to the PsbT family. In terms of assembly, PSII is composed of 1 copy each of membrane proteins PsbA, PsbB, PsbC, PsbD, PsbE, PsbF, PsbH, PsbI, PsbJ, PsbK, PsbL, PsbM, PsbT, PsbX, PsbY, Psb30/Ycf12, peripheral proteins PsbO, CyanoQ (PsbQ), PsbU, PsbV and a large number of cofactors. It forms dimeric complexes.

It localises to the cellular thylakoid membrane. Found at the monomer-monomer interface of the photosystem II (PS II) dimer, plays a role in assembly and dimerization of PSII. PSII is a light-driven water plastoquinone oxidoreductase, using light energy to abstract electrons from H(2)O, generating a proton gradient subsequently used for ATP formation. The sequence is that of Photosystem II reaction center protein T from Prochlorococcus marinus (strain MIT 9301).